A 105-amino-acid polypeptide reads, in one-letter code: ATPase inhibitor A, mitochondrial (105 aa).

A disordered region spans residues 17 to 52 (MSSDQLGELGTGAGKGGGGGGSVRAAGGSFGRREAA). Residues 22-51 (LGELGTGAGKGGGGGGSVRAAGGSFGRREA) are N-terminal inhibitory region. Over residues 25-38 (LGTGAGKGGGGGGS) the composition is skewed to gly residues. The stretch at 58 to 105 (FRQKEREQLAALKNHHEEEIDHHKKEIERLQREIDRHKGKIRKLKHDD) forms a coiled coil. The tract at residues 73–105 (HEEEIDHHKKEIERLQREIDRHKGKIRKLKHDD) is antiparallel alpha-helical coiled coil region.

Belongs to the ATPase inhibitor family. As to quaternary structure, homodimer; represents the active form and is present at a pH value below 6.5. Homotetramer; represents the inactive form and is present at a pH value above 7.0.

Its subcellular location is the mitochondrion. Endogenous F(1)F(o)-ATPase inhibitor limiting ATP depletion when the mitochondrial membrane potential falls below a threshold and the F(1)F(o)-ATP synthase starts hydrolyzing ATP to pump protons out of the mitochondrial matrix. Required to avoid the consumption of cellular ATP when the F(1)F(o)-ATP synthase enzyme acts as an ATP hydrolase. Indirectly acts as a regulator of heme synthesis in erythroid tissues: regulates heme synthesis by modulating the mitochondrial pH and redox potential, allowing fech to efficiently catalyze the incorporation of iron into protoporphyrin IX to produce heme. The protein is ATPase inhibitor A, mitochondrial of Danio rerio (Zebrafish).